The following is a 1647-amino-acid chain: Transcription elongation factor SPT6 homolog (1647 aa).

The segment at 1–209 (MARNAISDDE…SKKKKYRQGS (209 aa)) is disordered. Over residues 7–20 (SDDEEDHELEDDDG) the composition is skewed to acidic residues. Basic and acidic residues predominate over residues 21 to 30 (EPVHGDPAEH). The span at 31-67 (DENDDEEDDDDVGNEYENDGFIVNDEDEEEEEEEDEE) shows a compositional bias: acidic residues. Residues 103–114 (KFKKRQYKRLKK) are compositionally biased toward basic residues. Residues 132-151 (DSRGGTRRSAEDKIKDRLFD) show a composition bias toward basic and acidic residues. Over residues 152-191 (DVDVDDPPDDVGDEEDLVVEEDVVGSEDEMADFIVDEDDE) the composition is skewed to acidic residues. One can recognise an S1 motif domain in the interval 1103 to 1174 (GRIVQASVRR…QRYQVFLICK (72 aa)). Residues 1429 to 1647 (PMRSPADHGS…RKSDGGGGGW (219 aa)) are disordered. 2 repeat units span residues 1443–1444 (GW) and 1452–1453 (GW). The 12 X 2 AA repeats of [WG]-[GW] repeats stretch occupies residues 1443–1647 (GWGSSQSEGG…RKSDGGGGGW (205 aa)). Gly residues predominate over residues 1462–1471 (SGRGGEYRNG). The segment covering 1496–1507 (RRDDMNSDRQDG) has biased composition (basic and acidic residues). 6 consecutive repeat copies span residues 1511–1512 (WG), 1522–1523 (GW), 1530–1531 (GW), 1547–1548 (GW), 1563–1564 (WG), and 1574–1575 (GW). Gly residues-rich tracts occupy residues 1519 to 1532 (ADGG…GGWG), 1539 to 1552 (KTGG…GSES), 1561 to 1579 (GSWG…GNDS), and 1588 to 1600 (GGFG…GGSD). Tandem repeats lie at residues 1601–1602 (WG), 1615–1616 (GW), 1630–1631 (GW), and 1646–1647 (GW).

Belongs to the SPT6 family. In terms of assembly, interacts (via N-terminus) with IWS1. As to expression, expressed in shoot apical meristem, leaf primordia, vasculature of young leaves, inflorescence meristem, floral meristem, young floral organs, developing ovules and anthers.

The protein resides in the nucleus. Its function is as follows. Transcription elongation factor that enhances the transcription elongation by RNA polymerase II (RNAPII). Plays an important role in regulating embryo apical and basal patterning during early embryogenesis, partly through negative regulation of the transcription factors PHABULOSA and PHAVOLUTA. This chain is Transcription elongation factor SPT6 homolog, found in Arabidopsis thaliana (Mouse-ear cress).